A 593-amino-acid polypeptide reads, in one-letter code: Chaperone protein DnaK (593 aa).

Threonine 181 is modified (phosphothreonine; by autocatalysis).

It belongs to the heat shock protein 70 family.

Acts as a chaperone. The chain is Chaperone protein DnaK from Mycoplasmoides gallisepticum (strain R(low / passage 15 / clone 2)) (Mycoplasma gallisepticum).